A 555-amino-acid polypeptide reads, in one-letter code: Adenine deaminase (555 aa).

This sequence belongs to the metallo-dependent hydrolases superfamily. Adenine deaminase family. Requires Mn(2+) as cofactor.

It carries out the reaction adenine + H2O + H(+) = hypoxanthine + NH4(+). This is Adenine deaminase from Methanosarcina mazei (strain ATCC BAA-159 / DSM 3647 / Goe1 / Go1 / JCM 11833 / OCM 88) (Methanosarcina frisia).